The chain runs to 403 residues: Semaphorin-like protein A39 (403 aa).

The N-terminal stretch at 1-14 (MIPLLFILFYFANG) is a signal peptide. The Sema domain maps to 15-403 (IEWHKFETSE…MPQMKKILKM (389 aa)).

This sequence belongs to the semaphorin family. In terms of assembly, interacts with host VESPR.

It is found in the secreted. In terms of biological role, acts as a semaphorin-like protein and binds to host plexin C1 receptor. May alter the movement of host plexin C1-expressing cells including dendritic cells, monocytes, or granulocytes in the proximity of infected cells. May also regulate host cell cytoskeleton of neighboring cells to improve viral infection. In Homo sapiens (Human), this protein is Semaphorin-like protein A39.